Consider the following 757-residue polypeptide: MDVNPTLLFLKVPAQNAISTTFPYTGDPPYSHGTGTGYTMDTVNRTHQYSERGRWTKNTETGAPQLNPIDGPLPKDNEPSGYAQTDCVLEAMAFLEESHPGIFENSCIETMEVVQQTRVDKLTQGRQTYDWTLNRNQPAATALANTIEVFRSNGLMANESGRLIDFLKDVMESMDREEVEITTHFQRKRRVRDNVTKKMVTQRTIGKKKQRLNKRSYLIRALTLNTMTKDAERGKLKRRAIATPGMQIRGFVYFVETLARSICEKLEQSGLPVGGNEKKAKLANVVRKMMTNSQDTEISFTITGDNTKWNENQNPRMFLAMITYITRNQPEWFRNILSIAPIMFSNKMARLGKGYMFESKSMKLRTQIPAEMLANIDLKYFNDSTRKKIEKIRPLLIDGTASLSPGMMMGMFNMLSTVLGVSILNLGQKRYTKTTYWWDGLQSSDDFALIVNAPNYAGIQAGVDRFYRTCKLLGINMSKKKSYINRTGTFEFTSFFYRYGFVANFSMELPSFGVSGINESADMSIGVTVIKNNMINNDLGPATAQMALQLFIKDYRYTYRCHRGDTQIQTRRSFEIKKLWEQTRSKAGLLVSDGGPNLYNIRNLHIPEVCLKWELMDEDYQGRLCNPLNPFVSHKEIESVNNAVMMPAHGPAKNMEYDAVATTHSWVPKRNRSILNTSQRGILEDEQMYQRCCNLFEKFFPSSSYRRPVGISSMVEAMVSRARIDARIDFESGRIKKEEFTEIMKTCSTIEELRRQK.

The interval 53-82 (GRWTKNTETGAPQLNPIDGPLPKDNEPSGY) is disordered. 2 consecutive short sequence motifs (nuclear localization signal) follow at residues 187 to 195 (RKRRVRDNV) and 203 to 216 (RTIG…NKRS). The tract at residues 249–256 (RGFVYFVE) is promoter-binding site. The RdRp catalytic domain maps to 286–483 (VRKMMTNSQD…GINMSKKKSY (198 aa)).

It belongs to the influenza viruses polymerase PB1 family. Influenza RNA polymerase is composed of three subunits: PB1, PB2 and PA. Interacts (via N-terminus) with PA (via C-terminus). Interacts (via C-terminus) with PB2 (via N-terminus); this interaction is essential for transcription initiation. Interacts (via C-terminus) with human PKP2 (via N-terminus); the interaction competitively inhibits the interaction between the RNA polymerase subunits PB1 and PB2. In terms of processing, phosphorylated by host PRKCA.

The protein localises to the host nucleus. Its subcellular location is the host cytoplasm. The enzyme catalyses RNA(n) + a ribonucleoside 5'-triphosphate = RNA(n+1) + diphosphate. In terms of biological role, RNA-dependent RNA polymerase which is responsible for replication and transcription of virus RNA segments. The transcription of viral mRNAs occurs by a unique mechanism called cap-snatching. 5' methylated caps of cellular mRNAs are cleaved after 10-13 nucleotides by PA. In turn, these short capped RNAs are used as primers by PB1 for transcription of viral mRNAs. During virus replication, PB1 initiates RNA synthesis and copy vRNA into complementary RNA (cRNA) which in turn serves as a template for the production of more vRNAs. The chain is RNA-directed RNA polymerase catalytic subunit from Influenza A virus (strain A/Brazil/11/1978 H1N1).